The following is a 550-amino-acid chain: Eukaryotic translation initiation factor 3 subunit D-2 (550 aa).

Residues 108-152 (RTRGRTGRGTPNIASLGGSTAGGATASTTKYGKGRHTRNTQNVGR) form a disordered region. Residues 115-136 (RGTPNIASLGGSTAGGATASTT) are compositionally biased toward low complexity. The segment at 290–304 (QFDLLTVNETSVEPP) is RNA gate. Positions 527-550 (PENAFDSDRDEEESSEPLSNSNDN) are disordered.

This sequence belongs to the eIF-3 subunit D family. Component of the eukaryotic translation initiation factor 3 (eIF-3) complex. The eIF-3 complex interacts with pix.

The protein localises to the cytoplasm. Functionally, mRNA cap-binding component of the eukaryotic translation initiation factor 3 (eIF-3) complex, which is involved in protein synthesis of a specialized repertoire of mRNAs and, together with other initiation factors, stimulates binding of mRNA and methionyl-tRNAi to the 40S ribosome. The eIF-3 complex specifically targets and initiates translation of a subset of mRNAs involved in cell proliferation. In the eIF-3 complex, eif3d specifically recognizes and binds the 7-methylguanosine cap of a subset of mRNAs. In Drosophila sechellia (Fruit fly), this protein is Eukaryotic translation initiation factor 3 subunit D-2.